The following is a 297-amino-acid chain: Hydroxysqualene synthase (297 aa).

It belongs to the phytoene/squalene synthase family. HpnC subfamily.

It catalyses the reaction presqualene diphosphate + H2O = hydroxysqualene + diphosphate. It participates in secondary metabolite biosynthesis; hopanoid biosynthesis. Involved in the biosynthesis of the hopanoid precursor squalene (SQ) from farnesyl diphosphate (FPP). Catalyzes the second step, the conversion of presqualene diphosphate (PSPP) to hydroxysqualene (HSQ). The sequence is that of Hydroxysqualene synthase from Zymomonas mobilis subsp. mobilis (strain ATCC 31821 / ZM4 / CP4).